A 541-amino-acid polypeptide reads, in one-letter code: Chaperonin GroEL 2 (541 aa).

Residues 29-32 (TLGP), 86-90 (DGTTT), Gly-413, 476-478 (NAA), and Asp-492 contribute to the ATP site.

It belongs to the chaperonin (HSP60) family. As to quaternary structure, forms a cylinder of 14 subunits composed of two heptameric rings stacked back-to-back. Interacts with the co-chaperonin GroES.

It localises to the secreted. Its subcellular location is the capsule. It is found in the cell surface. The protein resides in the cell wall. It catalyses the reaction ATP + H2O + a folded polypeptide = ADP + phosphate + an unfolded polypeptide.. In terms of biological role, together with its co-chaperonin GroES, plays an essential role in assisting protein folding. The GroEL-GroES system forms a nano-cage that allows encapsulation of the non-native substrate proteins and provides a physical environment optimized to promote and accelerate protein folding. The sequence is that of Chaperonin GroEL 2 from Mycobacterium avium (strain 104).